The following is a 176-amino-acid chain: Disulfide bond formation protein B (176 aa).

The Cytoplasmic segment spans residues 1–14 (MLRFLNRCSRGRGA). The chain crosses the membrane as a helical span at residues 15–31 (WLLLAFTALALELTALY). Residues 32-49 (FQHVMLLKPCVLCIYQRS) are Periplasmic-facing. Residues cysteine 41 and cysteine 44 are joined by a disulfide bond. A helical transmembrane segment spans residues 50 to 65 (ALWGVFAAGIVGAIAP). Residues 66–71 (SSLLRY) lie on the Cytoplasmic side of the membrane. A helical transmembrane segment spans residues 72 to 89 (PAIALWIYSSYEGIRLAW). Topologically, residues 90-144 (KHTDILLNPSPFTTCDFFVSFPSWLPLDKWLPAIFNATGDCSERQWSFLSMEMPQ) are periplasmic. Cysteines 104 and 130 form a disulfide. Residues 145–163 (WLLGIFAAYLLIAVLVLIA) form a helical membrane-spanning segment. At 164–176 (QPFRSKRRDLFSR) the chain is on the cytoplasmic side.

It belongs to the DsbB family.

It localises to the cell inner membrane. In terms of biological role, required for disulfide bond formation in some periplasmic proteins. Acts by oxidizing the DsbA protein. The polypeptide is Disulfide bond formation protein B (Pectobacterium atrosepticum (strain SCRI 1043 / ATCC BAA-672) (Erwinia carotovora subsp. atroseptica)).